Consider the following 204-residue polypeptide: Large ribosomal subunit protein eL15 (204 aa).

Belongs to the eukaryotic ribosomal protein eL15 family. In terms of assembly, component of the large ribosomal subunit.

It localises to the cytoplasm. In terms of biological role, component of the large ribosomal subunit. The ribosome is a large ribonucleoprotein complex responsible for the synthesis of proteins in the cell. This Anguilla japonica (Japanese eel) protein is Large ribosomal subunit protein eL15 (rpl15).